The sequence spans 145 residues: Conglutin (145 aa).

The N-terminal stretch at 1–21 (MAKSTILVALLALVLVAHASA) is a signal peptide. Cystine bridges form between Cys35-Cys92, Cys47-Cys79, Cys80-Cys128, Cys94-Cys136, and Cys105-Cys145.

The protein belongs to the 2S seed storage albumins family. As to expression, expressed in seeds. Not expressed in roots, pegs (budding ovaries) or leaves.

The protein is Conglutin of Arachis hypogaea (Peanut).